A 208-amino-acid polypeptide reads, in one-letter code: Small ribosomal subunit protein uS4 (208 aa).

An S4 RNA-binding domain is found at Thr-98–Ala-164.

It belongs to the universal ribosomal protein uS4 family. Part of the 30S ribosomal subunit. Contacts protein S5. The interaction surface between S4 and S5 is involved in control of translational fidelity.

Its function is as follows. One of the primary rRNA binding proteins, it binds directly to 16S rRNA where it nucleates assembly of the body of the 30S subunit. With S5 and S12 plays an important role in translational accuracy. This Ruminiclostridium cellulolyticum (strain ATCC 35319 / DSM 5812 / JCM 6584 / H10) (Clostridium cellulolyticum) protein is Small ribosomal subunit protein uS4.